The primary structure comprises 218 residues: Glutathione S-transferase (218 aa).

The GST N-terminal domain maps to 3–88 (SKPVLGYWDI…YIGRKYKLTG (86 aa)). Residues 9–10 (YW), 43–46 (RSAW), lysine 50, 59–60 (NL), and 72–73 (QT) each bind glutathione. One can recognise a GST C-terminal domain in the interval 90-206 (NEPEELRVSL…YIKAQQPKLF (117 aa)). A substrate-binding site is contributed by tyrosine 116.

This sequence belongs to the GST superfamily. Mu family.

It carries out the reaction RX + glutathione = an S-substituted glutathione + a halide anion + H(+). Functionally, conjugation of reduced glutathione to a wide number of exogenous and endogenous hydrophobic electrophiles. This is Glutathione S-transferase from Tyrophagus putrescentiae (Mold mite).